The chain runs to 125 residues: Neuropeptide B (125 aa).

Positions methionine 1–alanine 24 are cleaved as a signal peptide. The segment at arginine 54–glutamate 73 is disordered. Residues serine 56–alanine 125 constitute a propeptide that is removed on maturation.

It belongs to the neuropeptide B/W family. In terms of tissue distribution, widely expressed in the central nervous system. High levels are found in substantia nigra, hypothalamus, hippocampus, spinal cord, placenta and fetal brain; lower levels are found in testis, uterus and ovary. Also detected at high levels in colorectal adenocarcinoma.

The protein resides in the secreted. Functionally, may be involved in the regulation of feeding, neuroendocrine system, memory, learning and in the afferent pain pathway. The protein is Neuropeptide B (NPB) of Homo sapiens (Human).